The chain runs to 83 residues: MSGSTGERSFADIITSIRYWVIHSITIPSLFIAGWLFVSTGLAYDVFGSPRPNEYFTESRQGIPLITDRFDSLEQLDEFSRSF.

The helical transmembrane segment at V21–W35 threads the bilayer. H23 serves as a coordination point for heme.

This sequence belongs to the PsbE/PsbF family. Heterodimer of an alpha subunit and a beta subunit. PSII is composed of 1 copy each of membrane proteins PsbA, PsbB, PsbC, PsbD, PsbE, PsbF, PsbH, PsbI, PsbJ, PsbK, PsbL, PsbM, PsbT, PsbX, PsbY, PsbZ, Psb30/Ycf12, at least 3 peripheral proteins of the oxygen-evolving complex and a large number of cofactors. It forms dimeric complexes. It depends on heme b as a cofactor.

The protein resides in the plastid. The protein localises to the chloroplast thylakoid membrane. Its function is as follows. This b-type cytochrome is tightly associated with the reaction center of photosystem II (PSII). PSII is a light-driven water:plastoquinone oxidoreductase that uses light energy to abstract electrons from H(2)O, generating O(2) and a proton gradient subsequently used for ATP formation. It consists of a core antenna complex that captures photons, and an electron transfer chain that converts photonic excitation into a charge separation. This is Cytochrome b559 subunit alpha from Agrostis stolonifera (Creeping bentgrass).